Reading from the N-terminus, the 816-residue chain is MKFTLNWLQKYVDTTGLTPTEIADKLTMLGLEVDSVAPIFEELAALKTGLVISCEKHPDADKLSLCQVQVGDDTHQIVCGAPNVREGLAVTVALPGAVLPGNFKIKKSKVRGIASAGMLCSERELGIGEDHDGIMELPEGMAHGQRFIDAMELSDTFIEVDLTPNRPDCASVIGTAREIAGKIGRPLQIPVKDRQIEAESRDFSVEVESSELCPRYTAKLIKNVTVGKSPWWLRKLLVSVGMRPINNIVDITNFVMLEYGQPLHAFDFKKVAGNKIVVRLPRENETEITTLDGTKREISAEMLLICDADKPIAVAGVMGGANSEIDAESTDILLESACFNPVSVRKTARNLKLPSEASYRFERGVDPGGVVNALDRAAELIAEIAGGALCSEGIDNYDGKKAVEVQRFSISRTSSLIGVEFSGEELTAMLTSIEMVVEKDPENEDILLVTAPTFRIDIEREADLVEEIARIYGYDNVPTATPLVALSYPEQDDDRLKRYPLALKLTRIGFNEAINYSFVTAQHADMLQLSEQDYRRKVVTLLNPLSEEQAVMRACLLPSLLENVKRNISFQKTAVKLFEIGKIFLAQGEDVQPIERQCITGVLSGNKFGESSSLYFKSANVDIFDAKGTVEFILSEMGLTDLANNEKIEFTVPPEGAREPFSTQDYALTIHLGPNVLGTIGKVEEEVLKSFGIKHEVYYFDLNFDALCALSPQTKAFSSLPVYPAVKRDIALVVPASISAGELLATVRSSRDKLMEYAEIFDVFEGGKIQKGYKSVAVSITYRSQTKTLTEKNVEKSHSKIVSLLTDRFGGSFRDA.

In terms of domain architecture, tRNA-binding spans 40 to 148; sequence FEELAALKTG…EGMAHGQRFI (109 aa). Residues 401 to 479 form the B5 domain; that stretch reads KAVEVQRFSI…RIYGYDNVPT (79 aa). Mg(2+) contacts are provided by Asp457, Asp463, Glu466, and Glu467. The 94-residue stretch at 721–814 folds into the FDX-ACB domain; the sequence is PVYPAVKRDI…LTDRFGGSFR (94 aa).

It belongs to the phenylalanyl-tRNA synthetase beta subunit family. Type 1 subfamily. As to quaternary structure, tetramer of two alpha and two beta subunits. It depends on Mg(2+) as a cofactor.

Its subcellular location is the cytoplasm. The catalysed reaction is tRNA(Phe) + L-phenylalanine + ATP = L-phenylalanyl-tRNA(Phe) + AMP + diphosphate + H(+). The polypeptide is Phenylalanine--tRNA ligase beta subunit (Desulfotalea psychrophila (strain LSv54 / DSM 12343)).